We begin with the raw amino-acid sequence, 322 residues long: ATP-dependent 6-phosphofructokinase (322 aa).

Residue glycine 13 participates in ATP binding. ADP is bound at residue 23-27 (RAVVR). ATP contacts are provided by residues 74–75 (RC) and 104–107 (GDGS). Aspartate 105 is a binding site for Mg(2+). Substrate is bound at residue 127 to 129 (TID). Catalysis depends on aspartate 129, which acts as the Proton acceptor. Arginine 156 lines the ADP pocket. Residues arginine 164 and 171–173 (MGR) each bind substrate. ADP contacts are provided by residues 187 to 189 (GAE) and 215 to 217 (KRH). Substrate contacts are provided by residues glutamate 224, arginine 246, and 252–255 (HIQR).

It belongs to the phosphofructokinase type A (PFKA) family. ATP-dependent PFK group I subfamily. Prokaryotic clade 'B1' sub-subfamily. In terms of assembly, homotetramer. Requires Mg(2+) as cofactor.

It localises to the cytoplasm. It catalyses the reaction beta-D-fructose 6-phosphate + ATP = beta-D-fructose 1,6-bisphosphate + ADP + H(+). Its pathway is carbohydrate degradation; glycolysis; D-glyceraldehyde 3-phosphate and glycerone phosphate from D-glucose: step 3/4. Its activity is regulated as follows. Allosterically activated by ADP and other diphosphonucleosides, and allosterically inhibited by phosphoenolpyruvate. Functionally, catalyzes the phosphorylation of D-fructose 6-phosphate to fructose 1,6-bisphosphate by ATP, the first committing step of glycolysis. In Paenibacillus macquariensis (Bacillus macquariensis), this protein is ATP-dependent 6-phosphofructokinase.